A 156-amino-acid chain; its full sequence is MNLNATFFAQMVVFFILWWVVAKFIWPPLVKALDERAKKIADGLAAAEKGKAELELANKRVDQAMAEARTEGAQRVADAEKRAQLTADEIKQNAQAEAARIIAQAKAEAEQQVTRARESLRDQVAVLAVKGAEQILKREVNAQVHADLLNQLKAEL.

The helical transmembrane segment at Phe-7–Pro-27 threads the bilayer.

This sequence belongs to the ATPase B chain family. As to quaternary structure, F-type ATPases have 2 components, F(1) - the catalytic core - and F(0) - the membrane proton channel. F(1) has five subunits: alpha(3), beta(3), gamma(1), delta(1), epsilon(1). F(0) has three main subunits: a(1), b(2) and c(10-14). The alpha and beta chains form an alternating ring which encloses part of the gamma chain. F(1) is attached to F(0) by a central stalk formed by the gamma and epsilon chains, while a peripheral stalk is formed by the delta and b chains.

The protein resides in the cell inner membrane. In terms of biological role, f(1)F(0) ATP synthase produces ATP from ADP in the presence of a proton or sodium gradient. F-type ATPases consist of two structural domains, F(1) containing the extramembraneous catalytic core and F(0) containing the membrane proton channel, linked together by a central stalk and a peripheral stalk. During catalysis, ATP synthesis in the catalytic domain of F(1) is coupled via a rotary mechanism of the central stalk subunits to proton translocation. Component of the F(0) channel, it forms part of the peripheral stalk, linking F(1) to F(0). The polypeptide is ATP synthase subunit b (Cupriavidus metallidurans (strain ATCC 43123 / DSM 2839 / NBRC 102507 / CH34) (Ralstonia metallidurans)).